Consider the following 933-residue polypeptide: Phosphoenolpyruvate carboxylase (933 aa).

Active-site residues include H158 and K592.

The protein belongs to the PEPCase type 1 family. Mg(2+) is required as a cofactor.

It catalyses the reaction oxaloacetate + phosphate = phosphoenolpyruvate + hydrogencarbonate. Functionally, forms oxaloacetate, a four-carbon dicarboxylic acid source for the tricarboxylic acid cycle. The sequence is that of Phosphoenolpyruvate carboxylase from Nitrosomonas eutropha (strain DSM 101675 / C91 / Nm57).